Reading from the N-terminus, the 273-residue chain is NH(3)-dependent NAD(+) synthetase (273 aa).

An ATP-binding site is contributed by 47-54 (GISGGQDS). Residue aspartate 53 coordinates Mg(2+). Arginine 139 is a binding site for deamido-NAD(+). ATP is bound at residue threonine 159. A Mg(2+)-binding site is contributed by glutamate 164. Deamido-NAD(+) is bound by residues lysine 172 and aspartate 179. 2 residues coordinate ATP: lysine 188 and threonine 210. 259–260 (HK) provides a ligand contact to deamido-NAD(+).

It belongs to the NAD synthetase family. As to quaternary structure, homodimer.

It catalyses the reaction deamido-NAD(+) + NH4(+) + ATP = AMP + diphosphate + NAD(+) + H(+). It functions in the pathway cofactor biosynthesis; NAD(+) biosynthesis; NAD(+) from deamido-NAD(+) (ammonia route): step 1/1. In terms of biological role, catalyzes the ATP-dependent amidation of deamido-NAD to form NAD. Uses ammonia as a nitrogen source. The polypeptide is NH(3)-dependent NAD(+) synthetase (Staphylococcus haemolyticus (strain JCSC1435)).